The primary structure comprises 606 residues: Calmegin (606 aa).

The first 19 residues, 1–19 (MRFQGFWLCLGLLFISVNA), serve as a signal peptide directing secretion. The Lumenal portion of the chain corresponds to 20 to 466 (EFMDDSVEME…QLMSATEQRP (447 aa)). Lys124 is subject to N6-acetyllysine. An intrachain disulfide couples Cys147 to Cys181. The tract at residues 255–308 (PPINPPKEIEDPTDEKPDDWDERAKIPDASAVKPEDWDESEPPQIVDSSAVKPD) is disordered. 8 consecutive repeat copies span residues 263–276 (IEDP…DWDE), 280–293 (IPDA…DWDE), 299–312 (IVDS…GWLD), 318–331 (IPDP…DWNE), 335–348 (GEWE…PACR), 352–365 (GEWS…PKYK), 366–379 (GIWR…PNYQ), and 380–393 (GIWS…PDYF). Acidic residues predominate over residues 265–275 (DPTDEKPDDWD). The interaction with PPIB stretch occupies residues 313–346 (NEPEFIPDPNAEKPFDWNEDMDGEWEAPHISNPA). Cys347 and Cys351 are joined by a disulfide. Residues 467 to 487 (WLWFIYLLTAALPIALIGSFC) traverse the membrane as a helical segment. The Cytoplasmic segment spans residues 488-606 (WPRKVKKKYE…SVRKRRVRKE (119 aa)). Over residues 518–544 (EVKEEKAALEKPVDLEEEKKQSDGEIV) the composition is skewed to basic and acidic residues. Residues 518–606 (EVKEEKAALE…SVRKRRVRKE (89 aa)) are disordered. Over residues 545–567 (EKEEEGEPEEKSEEEIEIIEGQE) the composition is skewed to acidic residues. Residues Ser556, Ser572, Ser575, Ser577, Ser587, Ser590, and Ser597 each carry the phosphoserine modification. Residues 568–579 (EGNKSNKSGSED) show a composition bias toward basic and acidic residues. The segment covering 597–606 (SVRKRRVRKE) has biased composition (basic residues).

Belongs to the calreticulin family. As to quaternary structure, interacts with PPIB and PDILT. Interacts with ADAM2.

It is found in the endoplasmic reticulum membrane. Functionally, functions during spermatogenesis as a chaperone for a range of client proteins that are important for sperm adhesion onto the egg zona pellucida and for subsequent penetration of the zona pellucida. Required for normal sperm migration from the uterus into the oviduct. Required for normal male fertility. Binds calcium ions. This Bos taurus (Bovine) protein is Calmegin (CLGN).